A 93-amino-acid chain; its full sequence is Protein YzgL (93 aa).

This Escherichia coli (strain K12) protein is Protein YzgL (yzgL).